Reading from the N-terminus, the 78-residue chain is Large ribosomal subunit protein bL28 (78 aa).

The interval 1 to 20 (MSRVCQVTSKRPAVGNNRSH) is disordered.

This sequence belongs to the bacterial ribosomal protein bL28 family.

The sequence is that of Large ribosomal subunit protein bL28 from Haemophilus ducreyi (strain 35000HP / ATCC 700724).